The chain runs to 96 residues: MDTDEQGAPGRKPLDRPQTPDELKFYARNYVMLALLAMILFLPFGILAIYFSIQTNEANKCSNWEDAYRNSSRTMWFNMLAIVAFVGIIYILVLVL.

Transmembrane regions (helical) follow at residues 31-51 (VMLA…AIYF) and 76-96 (WFNM…VLVL).

Belongs to the CD225/Dispanin family. In terms of tissue distribution, specifically expressed in testis.

It is found in the membrane. Its function is as follows. May play a role in spermatozoa mobility. In Mus musculus (Mouse), this protein is Transmembrane protein PMIS2.